We begin with the raw amino-acid sequence, 376 residues long: MAQKQKCVAMLLAGGKGSRLSALTKNLAKPAVPFGGKYRIIDFTLSNCANSGIETVGILTQYQPLELHNYIGIGNAWDLDRVSGGVTVLPPYAESSGVKWYTGTASAIYQNLNYLSQYEPDYVLILSGDHIYKMDYSKMLDYHIEKEADVSISVIEVPWDEASRFGIMNTNEEMEIVEFEEKPQFPRSNLASMGIYIFNWAILKEYLEMDARNPESSNDFGKDVLPLLLDEGKKLMAYPFEGYWKDVGTVKSLWEANMDLLRDETSLNLNDRDWRIYSVNPNEPPQYIAEKAKVEESLINEGCVIEGDVKHSVLFQGVTVEEGSMVIDSVVMPGAKIGKNVVIERAIVGSEMVIEDGTIIRPEKNVDDVVLIAEGK.

Alpha-D-glucose 1-phosphate is bound by residues tyrosine 101, glycine 166, 181 to 182, and serine 192; that span reads EK.

Belongs to the bacterial/plant glucose-1-phosphate adenylyltransferase family. As to quaternary structure, homotetramer.

It catalyses the reaction alpha-D-glucose 1-phosphate + ATP + H(+) = ADP-alpha-D-glucose + diphosphate. The protein operates within glycan biosynthesis; glycogen biosynthesis. Involved in the biosynthesis of ADP-glucose, a building block required for the elongation reactions to produce glycogen. Catalyzes the reaction between ATP and alpha-D-glucose 1-phosphate (G1P) to produce pyrophosphate and ADP-Glc. The sequence is that of Glucose-1-phosphate adenylyltransferase from Bacillus thuringiensis (strain Al Hakam).